Reading from the N-terminus, the 222-residue chain is Kinetochore protein Spc25 (222 aa).

Positions 51 to 86 form a coiled coil; sequence RHQRKVGKLQKVLMERREELDKRVSFIEELDRELEA.

This sequence belongs to the SPC25 family. In terms of assembly, component of the Ndc80 complex, which is composed of Ndc80, Nuf2 and Spc25.

The protein localises to the nucleus. It is found in the chromosome. It localises to the centromere. Its subcellular location is the kinetochore. Its function is as follows. Acts as a component of the essential kinetochore-associated Ndc80 complex, which is required for chromosome segregation and spindle checkpoint activity during meiosis and mitosis. Required for kinetochore integrity and the organization of stable microtubule binding sites in the outer plate of the kinetochore. Participates in SAC signaling that responds specifically to disruptions in spindle microtubule dynamics. The NDC80 complex synergistically enhances the affinity of the SKA1 complex for microtubules and may allow the NDC80 complex to track depolymerizing microtubules. This Drosophila mauritiana (Fruit fly) protein is Kinetochore protein Spc25.